The chain runs to 388 residues: Protein DJ-1 homolog D (388 aa).

PfpI endopeptidase domains lie at 5–190 (RTVL…KALG) and 198–383 (KRIL…ALLG). Cysteine 120 functions as the Nucleophile in the catalytic mechanism. Cysteine 120 is subject to Cysteine sulfenic acid (-SOH). Residue histidine 121 is part of the active site. Catalysis depends on cysteine 313, which acts as the Nucleophile. Cysteine 313 carries the post-translational modification Cysteine sulfinic acid (-SO2H). Residue histidine 314 is part of the active site.

The protein belongs to the peptidase C56 family. As to quaternary structure, homotrimer. Post-translationally, cys-120 and Cys-313 are oxidized to sulfinic acid.

The catalysed reaction is (R)-S-lactoylglutathione = methylglyoxal + glutathione. In terms of biological role, possesses glyoxalase I activity. Catalyzes the conversion of hemimercaptal, formed from methylglyoxal and glutathione, to S-lactoylglutathione. May be involved in oxidative stress response. In Arabidopsis thaliana (Mouse-ear cress), this protein is Protein DJ-1 homolog D (DJ1D).